The chain runs to 81 residues: Short neurotoxin 2 (81 aa).

An N-terminal signal peptide occupies residues 1–21 (MKTLLLTLVVVTIVCLDLGYT). 4 cysteine pairs are disulfide-bonded: C24/C43, C38/C60, C62/C73, and C74/C79.

This sequence belongs to the three-finger toxin family. Short-chain subfamily. Type I alpha-neurotoxin sub-subfamily. As to expression, expressed by the venom gland.

It localises to the secreted. Binds to muscle nicotinic acetylcholine receptor (nAChR) and inhibit acetylcholine from binding to the receptor, thereby impairing neuromuscular transmission. This is Short neurotoxin 2 from Hydrophis hardwickii (Hardwick's spine-bellied seasnake).